We begin with the raw amino-acid sequence, 1458 residues long: MSDSGSFAASRSRREKTEKSGRKEALERLKRAKAGEKVKYEVEQVSSIYEEVDEAEYSKLVRDRQDDDWIVDDDGTGYVEDGREIFDDDLEDNALADSGKGAKGAPKDKTNVKKSSVSKPNNIKSMFMASAVKKTTDKAVDLSKDDLLGDLLQDLKSQAVPITPPPVITLKKKKLAGSPLNPFSVPPTAPKVLPTSVKRLPAVTKPGHPAAQSKASVPRQIKKEPKAELISSAVGPLKVEAQVKEEDSGMVEFDDGDFDEPMEEDVEITPVDSSTIKTQAQSIKCVKEENIKEEKSSFITSATLNESCWDQIDEAEPMTTEIQVDSSHLPLVTGADGSQVFRFYWLDAYEDQYSQPGVVYLFGKVWIESADAYVSCCVSVKNIERTVYLLPRENRVQLSTGKDTGAPVSMMHVYQEFNEAVAEKYKIMKFKSKKVDKDYAFEIPDVPASSEYLEVRYSADSPQLPQDLKGETFSHVFGTNTSSLELFLLSRKIKGPSWLEIKSPQLSSQPMSWCKVEAVVTRPDQVSVVKDLAPPPVVVLSLSMKTVQNAKTHQNEIVAIAALVHHTFPLDKAPPQPPFQTHFCVLSKLNDCIFPYDYNEAVKQKNANIEIALTERTLLGFFLAKIHKIDPDVIVGHDIYGFDLEVLLQRINSCKVPFWSKIGRLRRSVMPKLGGRSGFAERNAACGRIICDIEISAKELIRCKSYHLSELVHQILKAERVVIPPENIRNAYNDSVHLLYMLENTWIDAKFILQIMCELNVLPLALQITNIAGNVMSRTLMGGRSERNEYLLLHAFTENNFIVPDKPVFKKMQQTTVEDNDDMGTDQNKNKSRKKAAYAGGLVLEPKVGFYDKFILLLDFNSLYPSIIQEYNICFTTVHREAPSTQKGEDQDEIPELPHSDLEMGILPREIRKLVERRRHVKQLMKQPDLNPDLYLQYDIRQKALKLTANSMYGCLGFSYSRFYAKPLAALVTHQGREILLHTKEMVQKMNLEVIYGDTDSIMINTNCNNLEEVFKLGNRVKSEINKSYKLLEIDIDGIFKSLLLLKKKKYAALTVEPTGDGKYVTKQELKGLDIVRRDWCELAKQAGNYVISQILSDQPRDSIVENIQKKLTEIGENVTNGTVPITQYEINKALTKDPQDYPDKKSLPHVHVALWINSQGGRKVKAGDTISYVICQDGSNLSASQRAYAQEQLQKQENLSIDTQYYLSQQVHPVVARICEPIDGIDSALIAMWLGLDPSQFRAHRHYQQDEENDALLGGPSQLTDEEKYRDCERFKFFCPKCGTENIYDNVFDGSGLQIEPGLKRCSKPECDASPLDYVIQVHNKLLLDIRRYIKKYYSGWLVCEEKTCQNRTRRLPLSFSRNGPICQACSKATLRSEYPEKALYTQLCFYRFIFDWDYALEKVVSEQERGHLKKKLFQESENQYKKLKSTVDQVLSRSGYSEVNLSKLFQTLNTIK.

Disordered regions lie at residues 1 to 25 and 89 to 119; these read MSDSGSFAASRSRREKTEKSGRKEA and DLEDNALADSGKGAKGAPKDKTNVKKSSVSK. The segment covering 15 to 25 has biased composition (basic and acidic residues); it reads EKTEKSGRKEA. 2 DNA-binding regions span residues 650-715 and 1241-1373; these read RINS…VHQI and QFRA…ACSK. C1280, C1283, C1307, C1312, C1345, C1350, C1368, and C1371 together coordinate Zn(2+). A CysA-type zinc finger spans residues 1280–1310; it reads CPKCGTENIYDNVFDGSGLQIEPGLKRCSKP. Residues 1345–1371 carry the CysB motif motif; that stretch reads CEEKTCQNRTRRLPLSFSRNGPICQAC.

It belongs to the DNA polymerase type-B family. In terms of assembly, the DNA polymerase alpha complex is composed of four subunits: the catalytic subunit POLA1, the regulatory subunit POLA2, and the small and the large primase subunits PRIM1 and PRIM2 respectively. Interacts with PARP1; this interaction functions as part of the control of replication fork progression. Interacts with MCM10 and WDHD1; these interactions recruit the polymerase alpha complex to the pre-replicative complex bound to DNA. Interacts with RPA1; this interaction stabilizes the replicative complex and reduces the misincorporation rate of DNA polymerase alpha by acting as a fidelity clamp.

The protein resides in the nucleus. It carries out the reaction DNA(n) + a 2'-deoxyribonucleoside 5'-triphosphate = DNA(n+1) + diphosphate. Plays an essential role in the initiation of DNA replication. During the S phase of the cell cycle, the DNA polymerase alpha complex (composed of a catalytic subunit POLA1/p180, a regulatory subunit POLA2/p70 and two primase subunits PRIM1/p49 and PRIM2/p58) is recruited to DNA at the replicative forks via direct interactions with MCM10 and WDHD1. The primase subunit of the polymerase alpha complex initiates DNA synthesis by oligomerising short RNA primers on both leading and lagging strands. These primers are initially extended by the polymerase alpha catalytic subunit and subsequently transferred to polymerase delta and polymerase epsilon for processive synthesis on the lagging and leading strand, respectively. The reason this transfer occurs is because the polymerase alpha has limited processivity and lacks intrinsic 3' exonuclease activity for proofreading error, and therefore is not well suited for replicating long complexes. This chain is DNA polymerase alpha catalytic subunit (pola1), found in Xenopus laevis (African clawed frog).